The following is a 466-amino-acid chain: Putative multidrug resistance protein MdtD (466 aa).

The next 14 membrane-spanning stretches (helical) occupy residues 11–31 (LWIV…VNTA), 48–68 (SVIV…GWLA), 71–91 (IGVK…SLLC), 105–125 (VIQG…VMKI), 137–157 (FVTL…GFLV), 164–184 (WIFL…WFLM), 194–214 (FDIS…LALD), 218–238 (SLGI…IALL), 262–282 (FSIG…LPFM), 292–312 (GFSP…SMGI), 328–347 (VLVA…ALVA), 351–370 (WIWM…AIRF), 402–422 (SLGV…HIAA), and 429–449 (TVFL…ALIF).

This sequence belongs to the major facilitator superfamily. TCR/Tet family.

The protein localises to the cell inner membrane. In Pectobacterium atrosepticum (strain SCRI 1043 / ATCC BAA-672) (Erwinia carotovora subsp. atroseptica), this protein is Putative multidrug resistance protein MdtD.